Consider the following 441-residue polypeptide: Signal recognition particle 54 kDa protein (441 aa).

GTP contacts are provided by residues 103-110 (GVQGSGKT), 184-188 (DTAGR), and 244-247 (TKMD).

This sequence belongs to the GTP-binding SRP family. SRP54 subfamily. In terms of assembly, part of the signal recognition particle protein translocation system, which is composed of SRP and FtsY. Archaeal SRP consists of a 7S RNA molecule of 300 nucleotides and two protein subunits: SRP54 and SRP19.

The protein resides in the cytoplasm. The catalysed reaction is GTP + H2O = GDP + phosphate + H(+). Functionally, involved in targeting and insertion of nascent membrane proteins into the cytoplasmic membrane. Binds to the hydrophobic signal sequence of the ribosome-nascent chain (RNC) as it emerges from the ribosomes. The SRP-RNC complex is then targeted to the cytoplasmic membrane where it interacts with the SRP receptor FtsY. The polypeptide is Signal recognition particle 54 kDa protein (Aeropyrum pernix (strain ATCC 700893 / DSM 11879 / JCM 9820 / NBRC 100138 / K1)).